A 340-amino-acid polypeptide reads, in one-letter code: Insulin gene enhancer protein ISL-2B (340 aa).

2 LIM zinc-binding domains span residues 9 to 62 (CVGC…CKRD) and 71 to 125 (CAKC…RADH). Positions 172-231 (TTRVRTVLNEKQLHTLRTCYNANPRPDALMKEQLVEMTGLSPRVIRVWFQNKRCKDKKRT) form a DNA-binding region, homeobox. A compositionally biased stretch (low complexity) spans 307 to 317 (ESGSMGNSSGS). Positions 307 to 340 (ESGSMGNSSGSDVTSLSSQLPDTPNSMVPSPMDT) are disordered. Polar residues predominate over residues 318 to 340 (DVTSLSSQLPDTPNSMVPSPMDT).

Its subcellular location is the nucleus. Binds to one of the cis-acting domain of the insulin gene enhancer. May be involved in subtype specialization of primary motoneurons. The protein is Insulin gene enhancer protein ISL-2B (isl2b) of Oncorhynchus tshawytscha (Chinook salmon).